The primary structure comprises 363 residues: Fructose-bisphosphate aldolase, muscle type (363 aa).

Residues R56 and K147 each contribute to the substrate site. K230 acts as the Schiff-base intermediate with dihydroxyacetone-P in catalysis.

It belongs to the class I fructose-bisphosphate aldolase family. As to quaternary structure, homotetramer. Expressed mainly in the skeletal muscle, heart muscle, brain, and some other tissues, but probably not in liver.

It catalyses the reaction beta-D-fructose 1,6-bisphosphate = D-glyceraldehyde 3-phosphate + dihydroxyacetone phosphate. It functions in the pathway carbohydrate degradation; glycolysis; D-glyceraldehyde 3-phosphate and glycerone phosphate from D-glucose: step 4/4. This Lethenteron camtschaticum (Japanese lamprey) protein is Fructose-bisphosphate aldolase, muscle type.